Reading from the N-terminus, the 148-residue chain is Snaclec stejaggregin-A subunit beta-3 (148 aa).

The N-terminal stretch at 1 to 23 (MGRFISVSFGLLVVFLSLSGAGA) is a signal peptide. The cysteines at positions 27 and 38 are disulfide-linked. The C-type lectin domain maps to 34 to 145 (YDLYCYKVFK…CSRTHYVVCK (112 aa)). 2 N-linked (GlcNAc...) asparagine glycosylation sites follow: Asn47 and Asn78. Intrachain disulfides connect Cys55-Cys144 and Cys121-Cys136.

Belongs to the snaclec family. In terms of assembly, heteromultimer; disulfide-linked. As to expression, expressed by the venom gland.

The protein resides in the secreted. Functionally, interferes with one step of hemostasis (modulation of platelet aggregation, or coagulation cascade, for example). The chain is Snaclec stejaggregin-A subunit beta-3 from Trimeresurus stejnegeri (Chinese green tree viper).